A 407-amino-acid chain; its full sequence is Melanoma-associated antigen B6 (407 aa).

The segment at 1–175 is disordered; that stretch reads MPRGHKSKLR…YDVAAEGEDE (175 aa). Polar residues-rich tracts occupy residues 18–29, 57–71, 94–113, and 136–155; these read TNGQPQGLTGPQ, DASI…SPTG, and PSTS…SPTG. An MAGE domain is found at 195–394; the sequence is VKKKACTLAQ…GLYPHLYEDA (200 aa).

In terms of tissue distribution, expressed in testis. Not expressed in other normal tissues, but is expressed in tumors of different histological origins.

This is Melanoma-associated antigen B6 (MAGEB6) from Homo sapiens (Human).